Here is a 1134-residue protein sequence, read N- to C-terminus: DNA polymerase II large subunit (1134 aa).

Belongs to the archaeal DNA polymerase II family. In terms of assembly, heterodimer of a large subunit and a small subunit.

The catalysed reaction is DNA(n) + a 2'-deoxyribonucleoside 5'-triphosphate = DNA(n+1) + diphosphate. It catalyses the reaction Exonucleolytic cleavage in the 3'- to 5'-direction to yield nucleoside 5'-phosphates.. Functionally, possesses two activities: a DNA synthesis (polymerase) and an exonucleolytic activity that degrades single-stranded DNA in the 3'- to 5'-direction. Has a template-primer preference which is characteristic of a replicative DNA polymerase. This chain is DNA polymerase II large subunit, found in Methanocella arvoryzae (strain DSM 22066 / NBRC 105507 / MRE50).